Here is a 508-residue protein sequence, read N- to C-terminus: Photosystem II CP47 reaction center protein (508 aa).

6 helical membrane passes run 21–36, 101–115, 140–156, 203–218, 237–252, and 457–472; these read AVHI…WAGS, IVFS…IWHW, GIHL…FGTF, IAAG…FHLS, VLSS…AFVV, and SFAL…HGAR.

It belongs to the PsbB/PsbC family. PsbB subfamily. PSII is composed of 1 copy each of membrane proteins PsbA, PsbB, PsbC, PsbD, PsbE, PsbF, PsbH, PsbI, PsbJ, PsbK, PsbL, PsbM, PsbT, PsbX, PsbY, PsbZ, Psb30/Ycf12, at least 3 peripheral proteins of the oxygen-evolving complex and a large number of cofactors. It forms dimeric complexes. The cofactor is Binds multiple chlorophylls. PSII binds additional chlorophylls, carotenoids and specific lipids..

Its subcellular location is the plastid. It is found in the chloroplast thylakoid membrane. Its function is as follows. One of the components of the core complex of photosystem II (PSII). It binds chlorophyll and helps catalyze the primary light-induced photochemical processes of PSII. PSII is a light-driven water:plastoquinone oxidoreductase, using light energy to abstract electrons from H(2)O, generating O(2) and a proton gradient subsequently used for ATP formation. In Citrus sinensis (Sweet orange), this protein is Photosystem II CP47 reaction center protein.